The chain runs to 31 residues: Photosystem II reaction center protein T (31 aa).

Residues 3–23 (ALVYTFLLIGTLGIIFFAIFF) form a helical membrane-spanning segment.

It belongs to the PsbT family. PSII is composed of 1 copy each of membrane proteins PsbA, PsbB, PsbC, PsbD, PsbE, PsbF, PsbH, PsbI, PsbJ, PsbK, PsbL, PsbM, PsbT, PsbY, PsbZ, Psb30/Ycf12, at least 3 peripheral proteins of the oxygen-evolving complex and a large number of cofactors. It forms dimeric complexes.

It localises to the plastid. The protein localises to the chloroplast thylakoid membrane. Functionally, found at the monomer-monomer interface of the photosystem II (PS II) dimer, plays a role in assembly and dimerization of PSII. PSII is a light-driven water plastoquinone oxidoreductase, using light energy to abstract electrons from H(2)O, generating a proton gradient subsequently used for ATP formation. In Tetradesmus obliquus (Green alga), this protein is Photosystem II reaction center protein T.